Here is a 125-residue protein sequence, read N- to C-terminus: Large ribosomal subunit protein bL12 (125 aa).

The segment at 95 to 125 is disordered; sequence APKPIKEGVDKKTAEEAKKKLEEAGAKAELK.

Belongs to the bacterial ribosomal protein bL12 family. Homodimer. Part of the ribosomal stalk of the 50S ribosomal subunit. Forms a multimeric L10(L12)X complex, where L10 forms an elongated spine to which 2 to 4 L12 dimers bind in a sequential fashion. Binds GTP-bound translation factors.

Forms part of the ribosomal stalk which helps the ribosome interact with GTP-bound translation factors. Is thus essential for accurate translation. The polypeptide is Large ribosomal subunit protein bL12 (Polynucleobacter necessarius subsp. necessarius (strain STIR1)).